Consider the following 352-residue polypeptide: Phosphoribosylformylglycinamidine cyclo-ligase (352 aa).

Belongs to the AIR synthase family.

Its subcellular location is the cytoplasm. It catalyses the reaction 2-formamido-N(1)-(5-O-phospho-beta-D-ribosyl)acetamidine + ATP = 5-amino-1-(5-phospho-beta-D-ribosyl)imidazole + ADP + phosphate + H(+). The protein operates within purine metabolism; IMP biosynthesis via de novo pathway; 5-amino-1-(5-phospho-D-ribosyl)imidazole from N(2)-formyl-N(1)-(5-phospho-D-ribosyl)glycinamide: step 2/2. This chain is Phosphoribosylformylglycinamidine cyclo-ligase, found in Pseudomonas syringae pv. tomato (strain ATCC BAA-871 / DC3000).